The chain runs to 210 residues: Cytochrome c biogenesis ATP-binding export protein CcmA (210 aa).

The 207-residue stretch at 3–209 folds into the ABC transporter domain; sequence LTVTNLACAR…PADDPFAGVT (207 aa). ATP is bound at residue 35-42; it reads GPNGIGKT.

Belongs to the ABC transporter superfamily. CcmA exporter (TC 3.A.1.107) family. In terms of assembly, the complex is composed of two ATP-binding proteins (CcmA) and two transmembrane proteins (CcmB).

The protein localises to the cell inner membrane. The catalysed reaction is heme b(in) + ATP + H2O = heme b(out) + ADP + phosphate + H(+). In terms of biological role, part of the ABC transporter complex CcmAB involved in the biogenesis of c-type cytochromes; once thought to export heme, this seems not to be the case, but its exact role is uncertain. Responsible for energy coupling to the transport system. This Cereibacter sphaeroides (strain ATCC 17023 / DSM 158 / JCM 6121 / CCUG 31486 / LMG 2827 / NBRC 12203 / NCIMB 8253 / ATH 2.4.1.) (Rhodobacter sphaeroides) protein is Cytochrome c biogenesis ATP-binding export protein CcmA.